The chain runs to 459 residues: ATP-dependent protease ATPase subunit HslU (459 aa).

ATP contacts are provided by residues Val-26, 68–73, Asp-271, Glu-337, and Arg-409; that span reads GVGKTE.

This sequence belongs to the ClpX chaperone family. HslU subfamily. As to quaternary structure, a double ring-shaped homohexamer of HslV is capped on each side by a ring-shaped HslU homohexamer. The assembly of the HslU/HslV complex is dependent on binding of ATP.

The protein localises to the cytoplasm. Functionally, ATPase subunit of a proteasome-like degradation complex; this subunit has chaperone activity. The binding of ATP and its subsequent hydrolysis by HslU are essential for unfolding of protein substrates subsequently hydrolyzed by HslV. HslU recognizes the N-terminal part of its protein substrates and unfolds these before they are guided to HslV for hydrolysis. In Xylella fastidiosa (strain 9a5c), this protein is ATP-dependent protease ATPase subunit HslU.